A 61-amino-acid chain; its full sequence is Metallothionein-1B (61 aa).

The interval 1–29 (MDPNCSCVAGESCTCAGSCKCKQCRCASC) is beta. A divalent metal cation-binding residues include cysteine 5, cysteine 7, cysteine 13, cysteine 15, cysteine 19, cysteine 21, cysteine 24, cysteine 26, cysteine 29, cysteine 33, cysteine 34, cysteine 36, cysteine 37, cysteine 41, cysteine 44, cysteine 48, cysteine 50, cysteine 57, cysteine 59, and cysteine 60. The interval 30–61 (KKSCCSCCPVGCAKCAQGCVCKGASDKCSCCA) is alpha.

It belongs to the metallothionein superfamily. Type 1 family.

Its function is as follows. Metallothioneins have a high content of cysteine residues that bind various heavy metals; these proteins are transcriptionally regulated by both heavy metals and glucocorticoids. This Equus caballus (Horse) protein is Metallothionein-1B.